Here is a 253-residue protein sequence, read N- to C-terminus: Glucosamine-6-phosphate deaminase (253 aa).

Asp-67 acts as the Proton acceptor; for enolization step in catalysis. Residue Asn-136 is the For ring-opening step of the active site. His-138 serves as the catalytic Proton acceptor; for ring-opening step. Glu-143 (for ring-opening step) is an active-site residue.

This sequence belongs to the glucosamine/galactosamine-6-phosphate isomerase family. NagB subfamily.

It catalyses the reaction alpha-D-glucosamine 6-phosphate + H2O = beta-D-fructose 6-phosphate + NH4(+). It participates in amino-sugar metabolism; N-acetylneuraminate degradation; D-fructose 6-phosphate from N-acetylneuraminate: step 5/5. Its function is as follows. Catalyzes the reversible isomerization-deamination of glucosamine 6-phosphate (GlcN6P) to form fructose 6-phosphate (Fru6P) and ammonium ion. The polypeptide is Glucosamine-6-phosphate deaminase (Thermoanaerobacter sp. (strain X514)).